The sequence spans 302 residues: Sulfate adenylyltransferase subunit 2 (302 aa).

This sequence belongs to the PAPS reductase family. CysD subfamily. Heterodimer composed of CysD, the smaller subunit, and CysN.

It catalyses the reaction sulfate + ATP + H(+) = adenosine 5'-phosphosulfate + diphosphate. Its pathway is sulfur metabolism; hydrogen sulfide biosynthesis; sulfite from sulfate: step 1/3. With CysN forms the ATP sulfurylase (ATPS) that catalyzes the adenylation of sulfate producing adenosine 5'-phosphosulfate (APS) and diphosphate, the first enzymatic step in sulfur assimilation pathway. APS synthesis involves the formation of a high-energy phosphoric-sulfuric acid anhydride bond driven by GTP hydrolysis by CysN coupled to ATP hydrolysis by CysD. This is Sulfate adenylyltransferase subunit 2 from Xanthomonas oryzae pv. oryzae (strain MAFF 311018).